We begin with the raw amino-acid sequence, 356 residues long: tRNA N6-adenosine threonylcarbamoyltransferase (356 aa).

Residues His-124, His-128, and Tyr-145 each coordinate a divalent metal cation. Substrate-binding positions include 145 to 149, Asp-177, Gly-192, Glu-196, and Asn-287; that span reads YVSGG. Asp-315 serves as a coordination point for a divalent metal cation.

It belongs to the KAE1 / TsaD family. As to quaternary structure, component of the EKC/KEOPS complex composed of at least BUD32, CGI121, GON7, KAE1 and PCC1; the whole complex dimerizes. Requires a divalent metal cation as cofactor.

The protein localises to the cytoplasm. It is found in the nucleus. It carries out the reaction L-threonylcarbamoyladenylate + adenosine(37) in tRNA = N(6)-L-threonylcarbamoyladenosine(37) in tRNA + AMP + H(+). In terms of biological role, component of the EKC/KEOPS complex that is required for the formation of a threonylcarbamoyl group on adenosine at position 37 (t(6)A37) in tRNAs that read codons beginning with adenine. The complex is probably involved in the transfer of the threonylcarbamoyl moiety of threonylcarbamoyl-AMP (TC-AMP) to the N6 group of A37. KAE1 likely plays a direct catalytic role in this reaction, but requires other protein(s) of the complex to fulfill this activity. The EKC/KEOPS complex also promotes both telomere uncapping and telomere elongation. The complex is required for efficient recruitment of transcriptional coactivators. The sequence is that of tRNA N6-adenosine threonylcarbamoyltransferase from Yarrowia lipolytica (strain CLIB 122 / E 150) (Yeast).